The chain runs to 212 residues: Fibrillarin-like rRNA/tRNA 2'-O-methyltransferase (212 aa).

Positions 1–37 are disordered; sequence MSEPNLPAGVERREIGGETRLATRGPPVYGEPTADGW. Residues 74–75, 90–91, 115–116, and 136–139 contribute to the S-adenosyl-L-methionine site; these read TT, EF, DA, and DVAT.

The protein belongs to the methyltransferase superfamily. Fibrillarin family. Interacts with nop5. Component of box C/D small ribonucleoprotein (sRNP) particles that contain rpl7ae, FlpA and nop5, plus a guide RNA.

Its function is as follows. Involved in pre-rRNA and tRNA processing. Utilizes the methyl donor S-adenosyl-L-methionine to catalyze the site-specific 2'-hydroxyl methylation of ribose moieties in rRNA and tRNA. Site specificity is provided by a guide RNA that base pairs with the substrate. Methylation occurs at a characteristic distance from the sequence involved in base pairing with the guide RNA. This chain is Fibrillarin-like rRNA/tRNA 2'-O-methyltransferase, found in Halorubrum lacusprofundi (strain ATCC 49239 / DSM 5036 / JCM 8891 / ACAM 34).